We begin with the raw amino-acid sequence, 66 residues long: Conotoxin TsMEKL-03 (66 aa).

The N-terminal stretch at 1 to 9 is a signal peptide; sequence VILLMSTQA. The propeptide occupies 10-38; sequence LIQSGVEKRSNKIKALSKRKTTAESWWEG. Intrachain disulfides connect Cys-40/Cys-54, Cys-47/Cys-58, and Cys-53/Cys-63.

This sequence belongs to the conotoxin O2 superfamily. Expressed by the venom duct.

It is found in the secreted. This Conus tessulatus (Tessellate cone) protein is Conotoxin TsMEKL-03.